Reading from the N-terminus, the 301-residue chain is Leucine-rich repeat-containing protein 30 (301 aa).

LRR repeat units follow at residues 72–93 (EVQK…VGKL), 95–116 (RIVV…VSLL), 118–139 (CLKV…LSLC), 141–163 (KLEV…ADLS), 164–185 (RLRK…VFSL), 187–208 (ELIF…IQHL), 210–231 (SLQI…LCLV), 233–254 (SLEL…LHLL), and 265–287 (MDKG…VEGG).

This is Leucine-rich repeat-containing protein 30 (LRRC30) from Homo sapiens (Human).